We begin with the raw amino-acid sequence, 379 residues long: GDSL esterase/lipase EXL2 (379 aa).

A signal peptide spans 1–35; sequence MKRNSINIHHVTSFSSSPFWCVFFLVLLCKTSTNA. A glycan (N-linked (GlcNAc...) asparagine) is linked at Asn42. Residue Ser54 is the Nucleophile of the active site. Active-site residues include Asp358 and His361.

Belongs to the 'GDSL' lipolytic enzyme family.

It localises to the secreted. The polypeptide is GDSL esterase/lipase EXL2 (EXL2) (Arabidopsis thaliana (Mouse-ear cress)).